The following is a 481-amino-acid chain: MGAFTKAAYFLLHPNQLRSIVQWKVWHEPVHRRDPSKETETEKACFRHLELTSRSFSAVIQELNPELLMPICLFYLVLRGLDTIEDDMTIDLAKKEPLLREFADLMEIDGWTFTENGPNEKDRELLVHFDDVIAELKKVKKPYYDIIREITVKMGNGMADYALNAEHNTNGVNTIEEYELYCHYVAGLVGEGLTRLFVESNLANPALLERMELTESMGQFLQKTNIIRDIHEDYVDKRRFWPKTIWSKYVNTWDDMFKPENREKALQCSSEMVLNALKHTEDCLFYMAGMRDQSVFNFVAIPQAMAIATLELVFRNPAIFERNVKITKGDACQLMMESTQNLRVVCEVFRRYARRIHKKNDPRDPNYLAISVQCGKIEQFIESIFPTQDPKKIALAQAQNSNQTAANTTDNGDTTFLVLSMIGVLFVMGGLMIGAAWLMGARFDMAYEDITARVGTLVNGAAAVSSATVSSIPTTVMHQEL.

Transmembrane regions (helical) follow at residues 294–314 and 416–436; these read SVFN…ELVF and FLVL…IGAA.

Belongs to the phytoene/squalene synthase family. Mg(2+) is required as a cofactor.

It is found in the endoplasmic reticulum membrane. The catalysed reaction is 2 (2E,6E)-farnesyl diphosphate + NADPH + H(+) = squalene + 2 diphosphate + NADP(+). It carries out the reaction 2 (2E,6E)-farnesyl diphosphate + NADH + H(+) = squalene + 2 diphosphate + NAD(+). It participates in terpene metabolism; lanosterol biosynthesis; lanosterol from farnesyl diphosphate: step 1/3. Catalyzes the condensation of 2 two farnesyl pyrophosphate moieties to form squalene. It is the first committed enzyme of the sterol biosynthesis pathway. Required for the biosynthesis of ergosterol. The chain is Probable squalene synthase (erg-6) from Neurospora crassa (strain ATCC 24698 / 74-OR23-1A / CBS 708.71 / DSM 1257 / FGSC 987).